Reading from the N-terminus, the 504-residue chain is ATP synthase subunit alpha, chloroplastic (504 aa).

170–177 (GDRQTGKT) contacts ATP.

Belongs to the ATPase alpha/beta chains family. F-type ATPases have 2 components, CF(1) - the catalytic core - and CF(0) - the membrane proton channel. CF(1) has five subunits: alpha(3), beta(3), gamma(1), delta(1), epsilon(1). CF(0) has four main subunits: a, b, b' and c.

The protein resides in the plastid. The protein localises to the chloroplast thylakoid membrane. It catalyses the reaction ATP + H2O + 4 H(+)(in) = ADP + phosphate + 5 H(+)(out). In terms of biological role, produces ATP from ADP in the presence of a proton gradient across the membrane. The alpha chain is a regulatory subunit. This is ATP synthase subunit alpha, chloroplastic from Hordeum vulgare (Barley).